Here is a 487-residue protein sequence, read N- to C-terminus: N-succinylglutamate 5-semialdehyde dehydrogenase (487 aa).

221–226 (GSSDTG) is a binding site for NAD(+). Catalysis depends on residues Glu-244 and Cys-278.

Belongs to the aldehyde dehydrogenase family. AstD subfamily.

The catalysed reaction is N-succinyl-L-glutamate 5-semialdehyde + NAD(+) + H2O = N-succinyl-L-glutamate + NADH + 2 H(+). Its pathway is amino-acid degradation; L-arginine degradation via AST pathway; L-glutamate and succinate from L-arginine: step 4/5. Catalyzes the NAD-dependent reduction of succinylglutamate semialdehyde into succinylglutamate. This Burkholderia lata (strain ATCC 17760 / DSM 23089 / LMG 22485 / NCIMB 9086 / R18194 / 383) protein is N-succinylglutamate 5-semialdehyde dehydrogenase.